The following is a 277-amino-acid chain: Protein CMSS1 (277 aa).

The span at 1 to 14 (MADDLGNEWWEEPA) shows a compositional bias: acidic residues. Residues 1 to 91 (MADDLGNEWW…QHAPTAGTPE (91 aa)) are disordered. Basic and acidic residues predominate over residues 24 to 34 (EEVKESEESKG). Positions 35-52 (NKKKKIPSGKTQVKRKKE) are enriched in basic residues. The span at 53 to 66 (VKVSQEAEKEDSAP) shows a compositional bias: basic and acidic residues.

This sequence belongs to the CMS1 family.

The chain is Protein CMSS1 (cmss1) from Xenopus laevis (African clawed frog).